A 195-amino-acid chain; its full sequence is ATP-dependent Clp protease proteolytic subunit (195 aa).

Ser-99 acts as the Nucleophile in catalysis. His-124 is an active-site residue.

The protein belongs to the peptidase S14 family. Fourteen ClpP subunits assemble into 2 heptameric rings which stack back to back to give a disk-like structure with a central cavity, resembling the structure of eukaryotic proteasomes.

It is found in the cytoplasm. It catalyses the reaction Hydrolysis of proteins to small peptides in the presence of ATP and magnesium. alpha-casein is the usual test substrate. In the absence of ATP, only oligopeptides shorter than five residues are hydrolyzed (such as succinyl-Leu-Tyr-|-NHMec, and Leu-Tyr-Leu-|-Tyr-Trp, in which cleavage of the -Tyr-|-Leu- and -Tyr-|-Trp bonds also occurs).. In terms of biological role, cleaves peptides in various proteins in a process that requires ATP hydrolysis. Has a chymotrypsin-like activity. Plays a major role in the degradation of misfolded proteins. The protein is ATP-dependent Clp protease proteolytic subunit of Caldicellulosiruptor saccharolyticus (strain ATCC 43494 / DSM 8903 / Tp8T 6331).